Reading from the N-terminus, the 117-residue chain is Aspartate 1-decarboxylase (117 aa).

Ser25 (schiff-base intermediate with substrate; via pyruvic acid) is an active-site residue. Residue Ser25 is modified to Pyruvic acid (Ser). A substrate-binding site is contributed by Thr57. Tyr58 serves as the catalytic Proton donor. A substrate-binding site is contributed by 72–74; it reads GAA.

Belongs to the PanD family. Heterooctamer of four alpha and four beta subunits. It depends on pyruvate as a cofactor. Is synthesized initially as an inactive proenzyme, which is activated by self-cleavage at a specific serine bond to produce a beta-subunit with a hydroxyl group at its C-terminus and an alpha-subunit with a pyruvoyl group at its N-terminus.

The protein resides in the cytoplasm. It catalyses the reaction L-aspartate + H(+) = beta-alanine + CO2. It participates in cofactor biosynthesis; (R)-pantothenate biosynthesis; beta-alanine from L-aspartate: step 1/1. Functionally, catalyzes the pyruvoyl-dependent decarboxylation of aspartate to produce beta-alanine. This chain is Aspartate 1-decarboxylase, found in Helicobacter pylori (strain J99 / ATCC 700824) (Campylobacter pylori J99).